Reading from the N-terminus, the 274-residue chain is Peroxiredoxin-4 (274 aa).

Residues 1–40 form the signal peptide; it reads MEAPPPPPPLPATTLAPGRSRKLLLLPLLLFLLRAEAVRG. Residues 82–240 enclose the Thioredoxin domain; it reads AKISKPAPYW…TLRLVQAFQY (159 aa). Cysteine 127 functions as the Cysteine sulfenic acid (-SOH) intermediate in the catalytic mechanism.

It belongs to the peroxiredoxin family. AhpC/Prx1 subfamily. As to quaternary structure, homodimer; disulfide-linked, upon oxidation. 5 homodimers assemble to form a ring-like decamer. Post-translationally, the enzyme can be inactivated by further oxidation of the cysteine sulfenic acid (C(P)-SOH) to sulphinic acid (C(P)-SO2H) and sulphonic acid (C(P)-SO3H) instead of its condensation to a disulfide bond.

Its subcellular location is the cytoplasm. The protein resides in the endoplasmic reticulum. The catalysed reaction is a hydroperoxide + [thioredoxin]-dithiol = an alcohol + [thioredoxin]-disulfide + H2O. Functionally, thiol-specific peroxidase that catalyzes the reduction of hydrogen peroxide and organic hydroperoxides to water and alcohols, respectively. Plays a role in cell protection against oxidative stress by detoxifying peroxides and as sensor of hydrogen peroxide-mediated signaling events. Regulates the activation of NF-kappa-B in the cytosol by a modulation of I-kappa-B-alpha phosphorylation. The chain is Peroxiredoxin-4 (PRDX4) from Bos taurus (Bovine).